An 852-amino-acid polypeptide reads, in one-letter code: Protein SBE22 (852 aa).

A disordered region spans residues 1–158 (MTSIQERGTS…ADKSKINTFP (158 aa)). Residues 15-26 (SLKEGEASDRSS) show a composition bias toward basic and acidic residues. Polar residues predominate over residues 43 to 61 (PPSQTTLGRSRAGSNTMNK). Ser-72 is modified (phosphoserine). Residues 74 to 96 (NLLSNMNCSDNGNGGNMLNSFVN) show a composition bias toward polar residues. Low complexity predominate over residues 124–139 (TTEVFSSTSASSSLGD). The residue at position 201 (Ser-201) is a Phosphoserine. Residues 206–248 (AAEKTMNKSRHSYQEQFSSKKSQSSLLNSKQRSRAKSQTCSST) form a disordered region. Low complexity predominate over residues 224–235 (SKKSQSSLLNSK). 3 positions are modified to phosphoserine: Ser-459, Ser-517, and Ser-520.

This sequence belongs to the SBE2 family.

It is found in the cytoplasm. The protein localises to the golgi apparatus. Functionally, with SBE2, is involved in cell wall integrity and polarity processes like bud growth, through the transport of CHS3 and UTR2 to sites of growth. This is Protein SBE22 (SBE22) from Saccharomyces cerevisiae (strain YJM789) (Baker's yeast).